The sequence spans 495 residues: MFPPSSDLTELNDGQPLSGHHADKPEEACGVFGIYAPEEAVAKLTYFGLYALQHRGQESAGIATFAGTTVHCHKDMGLVSQVFQESKLNEMVGTLAVGHTRYSTTGSSHRVNAQPAVLPTRLGPLALAHNGNLVNTNQLREALAERGCEDFVTTTDSEMIAVAIANEVDKGKDWVEGTIAALTLCAGAYSLVIGTPEGIIGVRDPHGIRPLVIGVLEEETPRYVLASETCALDIIGATYVRTVEAGELVHITESGLVSHRLAESADRKLCVFEMIYFSRPDSVVNDESLYTYRMRIGKHLAKESPVDADLVMGVPDSGIPAAIGFSQASGIPYAEGLIKNRYVGRTFIQPTQHMREHGIRMKLNPLKDVLAGKRIIIVDDSIVRGTTSRKIVRALREAGATEVHMRISSPPVTHPCFYGIDTDSQDQLIAARLTVAEIAEQIEVDSLAYLSQEGMLLCTGEDISHFCSACFNGRYPITVPDAVRRSKLMLENITA.

Positions 1-22 (MFPPSSDLTELNDGQPLSGHHA) are disordered. Positions 1 to 28 (MFPPSSDLTELNDGQPLSGHHADKPEEA) are excised as a propeptide. C29 functions as the Nucleophile in the catalytic mechanism. The region spanning 29–254 (CGVFGIYAPE…AGELVHITES (226 aa)) is the Glutamine amidotransferase type-2 domain. C270 lines the [4Fe-4S] cluster pocket. Mg(2+) is bound by residues S317, D379, and D380. Residues C416, C467, and C470 each contribute to the [4Fe-4S] cluster site.

In the C-terminal section; belongs to the purine/pyrimidine phosphoribosyltransferase family. Mg(2+) serves as cofactor. Requires [4Fe-4S] cluster as cofactor.

It catalyses the reaction 5-phospho-beta-D-ribosylamine + L-glutamate + diphosphate = 5-phospho-alpha-D-ribose 1-diphosphate + L-glutamine + H2O. Its pathway is purine metabolism; IMP biosynthesis via de novo pathway; N(1)-(5-phospho-D-ribosyl)glycinamide from 5-phospho-alpha-D-ribose 1-diphosphate: step 1/2. Functionally, catalyzes the formation of phosphoribosylamine from phosphoribosylpyrophosphate (PRPP) and glutamine. This chain is Amidophosphoribosyltransferase, found in Synechocystis sp. (strain ATCC 27184 / PCC 6803 / Kazusa).